A 117-amino-acid chain; its full sequence is UPF0231 protein HI_1724 (117 aa).

This sequence belongs to the UPF0231 family.

The chain is UPF0231 protein HI_1724 from Haemophilus influenzae (strain ATCC 51907 / DSM 11121 / KW20 / Rd).